We begin with the raw amino-acid sequence, 396 residues long: Purine ribonucleoside efflux pump NepI (396 aa).

Over 1–21 the chain is Cytoplasmic; it reads MSEFIAENRGADAITRPNWSA. Residues 22–42 traverse the membrane as a helical segment; sequence VFSVAFCVACLIIVEFLPVSL. Residues 43–54 lie on the Periplasmic side of the membrane; sequence LTPMAQDLGISE. Residues 55–75 form a helical membrane-spanning segment; sequence GVAGQSVTVTAFVAMFASLFI. Residues 76 to 85 are Cytoplasmic-facing; sequence TQTIQATDRR. A helical transmembrane segment spans residues 86 to 106; that stretch reads YVVILFAVLLTLSCLLVSFAN. Ser107 is a topological domain (periplasmic). The helical transmembrane segment at 108-128 threads the bilayer; the sequence is FSLLLIGRACLGLALGGFWAM. The Cytoplasmic portion of the chain corresponds to 129–147; sequence SASLTMRLVPPRTVPKALS. The helical transmembrane segment at 148-168 threads the bilayer; sequence VIFGAVSIALVIAAPLGSFLG. Residues 169–175 lie on the Periplasmic side of the membrane; the sequence is ELIGWRN. A helical membrane pass occupies residues 176–196; that stretch reads VFNAAAAMGVLCIFWIIKSLP. Over 197-215 the chain is Cytoplasmic; sequence SLPGEPSHQKQNTFRLLQR. The helical transmembrane segment at 216-236 threads the bilayer; the sequence is PGVMAGMIAIFMSFAGQFAFF. The Periplasmic segment spans residues 237–255; the sequence is TYIRPVYMNLAGFGVDGLT. A helical transmembrane segment spans residues 256–276; sequence LVLLSFGIASFVGTSLSSFIL. Residues 277–281 lie on the Cytoplasmic side of the membrane; it reads KRSVK. A helical membrane pass occupies residues 282 to 302; that stretch reads LALAGAPFVLALSALVLTLWG. The Periplasmic segment spans residues 303 to 305; sequence SDK. The chain crosses the membrane as a helical span at residues 306 to 326; that stretch reads IVATGVAIIWGLTFALIPVGW. Residues 327-343 are Cytoplasmic-facing; that stretch reads STWITRSLADQAEKAGS. Residues 344 to 364 traverse the membrane as a helical segment; sequence IQVAVIQLANTCGAAIGGYAL. Residues 365–366 lie on the Periplasmic side of the membrane; sequence DN. A helical membrane pass occupies residues 367 to 387; that stretch reads IGLTSPLMLSGTLMLLTALLV. The Cytoplasmic portion of the chain corresponds to 388–396; sequence TAKVKMKKS.

Belongs to the major facilitator superfamily. DHA1 family. NepI (TC 2.A.1.2.26) subfamily.

It localises to the cell inner membrane. The enzyme catalyses inosine(in) + H(+)(out) = inosine(out) + H(+)(in). It catalyses the reaction guanosine(in) + H(+)(out) = guanosine(out) + H(+)(in). Its function is as follows. Involved in the efflux of purine ribonucleosides, such as inosine and guanosine. This Escherichia coli O1:K1 / APEC protein is Purine ribonucleoside efflux pump NepI.